We begin with the raw amino-acid sequence, 1197 residues long: DNA-directed RNA polymerase subunit beta (1197 aa).

Positions 1172-1185 (KEQEEKKAQQEAEK) are enriched in basic and acidic residues. Residues 1172–1197 (KEQEEKKAQQEAEKAQAASAEDPSAE) are disordered. Over residues 1186 to 1197 (AQAASAEDPSAE) the composition is skewed to low complexity.

This sequence belongs to the RNA polymerase beta chain family. In terms of assembly, the RNAP catalytic core consists of 2 alpha, 1 beta, 1 beta' and 1 omega subunit. When a sigma factor is associated with the core the holoenzyme is formed, which can initiate transcription.

The enzyme catalyses RNA(n) + a ribonucleoside 5'-triphosphate = RNA(n+1) + diphosphate. In terms of biological role, DNA-dependent RNA polymerase catalyzes the transcription of DNA into RNA using the four ribonucleoside triphosphates as substrates. The polypeptide is DNA-directed RNA polymerase subunit beta (Latilactobacillus sakei subsp. sakei (strain 23K) (Lactobacillus sakei subsp. sakei)).